Reading from the N-terminus, the 554-residue chain is Transcription factor 7-like 1-A (554 aa).

A compositionally biased stretch (gly residues) spans 1 to 11 (MPQLNSGGGDE). The interaction with CTNNB1-A stretch occupies residues 1–61 (MPQLNSGGGD…SENHSSDSDS (61 aa)). Disordered regions lie at residues 1–73 (MPQL…REAF), 183–213 (GTPP…PYYP), and 391–475 (WSAR…LTTK). Basic and acidic residues-rich tracts occupy residues 17 to 32 (ELIR…EKSP) and 52 to 73 (SENH…REAF). An interaction with AES and TLE4-A region spans residues 109 to 312 (LGGHYLPNGA…SPNLHTKSNM (204 aa)). The segment at residues 324–392 (IKKPLNAFML…LHSQLYPSWS (69 aa)) is a DNA-binding region (HMG box). The segment covering 407 to 416 (KQSPEMETHT) has biased composition (basic and acidic residues). The segment at 408–554 (QSPEMETHTK…PLSLVTKSSD (147 aa)) is interaction with CTBP-B. A compositionally biased stretch (low complexity) spans 445–464 (SPATPSAALASPAAPAATHS). The segment covering 465–474 (EQAQPLSLTT) has biased composition (polar residues).

This sequence belongs to the TCF/LEF family. In terms of assembly, interacts with csnk1e, ctnnb1-A, ctbp-B, dact1-A and gsk3b. May interact with ase and tle4-A. Phosphorylated. Phosphorylation by csnk1e promotes binding to ctnnb1-A while phosphorylation by gsk3b may reverse this effect.

The protein localises to the cytoplasm. Its subcellular location is the nucleus. Participates in the Wnt signaling pathway. Binds to DNA and acts as a repressor in the absence of ctnnb1-A and possibly ctnnb1-B, and as an activator in the presence of these proteins. Required early in development for the establishment of the dorsal body axis in response to maternal Wnt signaling. Also required during development of the CNS for the establishment of dorsal-ventral patterning in the prospective diencephalon. The sequence is that of Transcription factor 7-like 1-A (tcf7l1-a) from Xenopus laevis (African clawed frog).